A 159-amino-acid polypeptide reads, in one-letter code: Transcriptional repressor NrdR (159 aa).

The segment at 3 to 34 is a zinc-finger region; sequence CPFCGSDNTSVKDSRAAEDDTAVRRRRVCESC. The 91-residue stretch at 49–139 folds into the ATP-cone domain; the sequence is IIVVKRDGKR…VYRDFKDPSD (91 aa).

Belongs to the NrdR family. It depends on Zn(2+) as a cofactor.

Its function is as follows. Negatively regulates transcription of bacterial ribonucleotide reductase nrd genes and operons by binding to NrdR-boxes. The polypeptide is Transcriptional repressor NrdR (Hyphomonas neptunium (strain ATCC 15444)).